The sequence spans 143 residues: Anti-sigma F factor (143 aa).

Belongs to the anti-sigma-factor family.

The enzyme catalyses L-seryl-[protein] + ATP = O-phospho-L-seryl-[protein] + ADP + H(+). It carries out the reaction L-threonyl-[protein] + ATP = O-phospho-L-threonyl-[protein] + ADP + H(+). Binds to sigma F and blocks its ability to form an RNA polymerase holoenzyme (E-sigma F). Phosphorylates SpoIIAA on a serine residue. This phosphorylation may enable SpoIIAA to act as an anti-anti-sigma factor that counteracts SpoIIAB and thus releases sigma F from inhibition. In Caldanaerobacter subterraneus subsp. tengcongensis (strain DSM 15242 / JCM 11007 / NBRC 100824 / MB4) (Thermoanaerobacter tengcongensis), this protein is Anti-sigma F factor.